We begin with the raw amino-acid sequence, 185 residues long: Ribosome-recycling factor (185 aa).

It belongs to the RRF family.

Its subcellular location is the cytoplasm. Responsible for the release of ribosomes from messenger RNA at the termination of protein biosynthesis. May increase the efficiency of translation by recycling ribosomes from one round of translation to another. This is Ribosome-recycling factor from Oceanobacillus iheyensis (strain DSM 14371 / CIP 107618 / JCM 11309 / KCTC 3954 / HTE831).